The chain runs to 150 residues: D-aminoacyl-tRNA deacylase (150 aa).

Positions 136-137 match the Gly-cisPro motif, important for rejection of L-amino acids motif; that stretch reads GP.

Belongs to the DTD family. As to quaternary structure, homodimer.

It is found in the cytoplasm. It carries out the reaction glycyl-tRNA(Ala) + H2O = tRNA(Ala) + glycine + H(+). The enzyme catalyses a D-aminoacyl-tRNA + H2O = a tRNA + a D-alpha-amino acid + H(+). In terms of biological role, an aminoacyl-tRNA editing enzyme that deacylates mischarged D-aminoacyl-tRNAs. Also deacylates mischarged glycyl-tRNA(Ala), protecting cells against glycine mischarging by AlaRS. Acts via tRNA-based rather than protein-based catalysis; rejects L-amino acids rather than detecting D-amino acids in the active site. By recycling D-aminoacyl-tRNA to D-amino acids and free tRNA molecules, this enzyme counteracts the toxicity associated with the formation of D-aminoacyl-tRNA entities in vivo and helps enforce protein L-homochirality. The polypeptide is D-aminoacyl-tRNA deacylase (Staphylococcus epidermidis (strain ATCC 35984 / DSM 28319 / BCRC 17069 / CCUG 31568 / BM 3577 / RP62A)).